The chain runs to 601 residues: tRNA 5-methylaminomethyl-2-thiouridine biosynthesis bifunctional protein MnmC (601 aa).

The tRNA (mnm(5)s(2)U34)-methyltransferase stretch occupies residues 1–237 (MSDPTASPLI…KKQRLEAVAP (237 aa)). The FAD-dependent cmnm(5)s(2)U34 oxidoreductase stretch occupies residues 252 to 601 (IGGGIAGAAM…FSSRVATGAV (350 aa)).

This sequence in the N-terminal section; belongs to the methyltransferase superfamily. tRNA (mnm(5)s(2)U34)-methyltransferase family. In the C-terminal section; belongs to the DAO family. FAD serves as cofactor.

It is found in the cytoplasm. The catalysed reaction is 5-aminomethyl-2-thiouridine(34) in tRNA + S-adenosyl-L-methionine = 5-methylaminomethyl-2-thiouridine(34) in tRNA + S-adenosyl-L-homocysteine + H(+). Catalyzes the last two steps in the biosynthesis of 5-methylaminomethyl-2-thiouridine (mnm(5)s(2)U) at the wobble position (U34) in tRNA. Catalyzes the FAD-dependent demodification of cmnm(5)s(2)U34 to nm(5)s(2)U34, followed by the transfer of a methyl group from S-adenosyl-L-methionine to nm(5)s(2)U34, to form mnm(5)s(2)U34. The sequence is that of tRNA 5-methylaminomethyl-2-thiouridine biosynthesis bifunctional protein MnmC from Caulobacter sp. (strain K31).